Consider the following 543-residue polypeptide: Glucose-6-phosphate isomerase (543 aa).

The active-site Proton donor is the E353. Catalysis depends on residues H384 and K504.

Belongs to the GPI family.

It localises to the cytoplasm. It catalyses the reaction alpha-D-glucose 6-phosphate = beta-D-fructose 6-phosphate. It participates in carbohydrate biosynthesis; gluconeogenesis. Its pathway is carbohydrate degradation; glycolysis; D-glyceraldehyde 3-phosphate and glycerone phosphate from D-glucose: step 2/4. Functionally, catalyzes the reversible isomerization of glucose-6-phosphate to fructose-6-phosphate. This chain is Glucose-6-phosphate isomerase, found in Roseiflexus castenholzii (strain DSM 13941 / HLO8).